Reading from the N-terminus, the 941-residue chain is ATP-dependent 6-phosphofructokinase subunit beta (941 aa).

The tract at residues 2–558 (PDASLFNGTS…HMKNFISTNS (557 aa)) is N-terminal catalytic PFK domain 1. Residues glycine 191, 255 to 256 (RC), and 285 to 288 (GDGS) each bind ATP. Aspartate 286 serves as a coordination point for Mg(2+). Residues 331–333 (SID), arginine 368, and 375–377 (MGR) each bind beta-D-fructose 6-phosphate. Aspartate 333 functions as the Proton acceptor in the catalytic mechanism. ATP is bound by residues isoleucine 395, 400–405 (KPASSR), and glutamine 410. Beta-D-fructose 6-phosphate is bound by residues glutamate 432, arginine 460, and 466 to 469 (HVQR). 557-558 (NS) is an ATP binding site. Residues 559–572 (ADHVPPSLPLEKRK) are interdomain linker. A C-terminal regulatory PFK domain 2 region spans residues 573–941 (KIAIINVGAP…SDMLSGRTSL (369 aa)). Beta-D-fructose 2,6-bisphosphate-binding positions include arginine 643, 701 to 705 (TISNN), arginine 739, 746 to 748 (QGG), glutamate 806, lysine 832, 838 to 841 (HVQQ), and arginine 918.

Belongs to the phosphofructokinase type A (PFKA) family. ATP-dependent PFK group I subfamily. Eukaryotic two domain clade 'E' sub-subfamily. Heterododecamer of 4 alpha, 4 beta and 4 gamma chains. It depends on Mg(2+) as a cofactor.

It is found in the cytoplasm. It carries out the reaction beta-D-fructose 6-phosphate + ATP = beta-D-fructose 1,6-bisphosphate + ADP + H(+). Its pathway is carbohydrate degradation; glycolysis; D-glyceraldehyde 3-phosphate and glycerone phosphate from D-glucose: step 3/4. Allosterically activated by ADP, AMP, or fructose 2,6-bisphosphate, and allosterically inhibited by ATP or citrate. Catalyzes the phosphorylation of D-fructose 6-phosphate to fructose 1,6-bisphosphate by ATP, the first committing step of glycolysis. In Komagataella pastoris (Yeast), this protein is ATP-dependent 6-phosphofructokinase subunit beta (PFK2).